The primary structure comprises 529 residues: MEHLNQEQKAAVTCDNGVNVVYSGAGTGKTTVIAERFAYLVNEKGVNPQSILAFTFTDKAASEMRQRIIKLIPQKSLQDLHIYTFHSFANRFLQKHGKSDFAILSDSNRFFSDYEMGDQLQTVVEIYKNKVVDLELDNLEYNSAFRDACTDTFNEDFSTISNGQFRKRAATALRAYQNYLITNNLFDFSDLIIETCHLLKGNSELLQAFTESVHYILVDEFQDTNLAQYELVKLLATTHPNLFLVGDSNQMIYGWRGAVVEIFELLKNDFQAVKEFYTTQNYRSIQAVLAVANDVLTAIARKERKALVLLHSSIDSKAVPVHYKANSLKNQDQWIIYQMKQLHLNNGVPYDQMAVLFRKNKHLDAFSQTVLEDGDLPLAKLNLLTIHAAKGLEFEAVFVYGLVERAFPSLHWDGSDKHKLLEEMKLFYVAITRAKQFLFLVSVSVESFNAYYEPSRFLKLIEKEHLQTQKAAYFKEQLKTQPKPVNLYTETENAENLQKATDSKKWIILGAILLIIVIITAVLKLFVEN.

One can recognise a UvrD-like helicase ATP-binding domain in the interval 2–285 (EHLNQEQKAA…FYTTQNYRSI (284 aa)). 23-30 (SGAGTGKT) lines the ATP pocket.

The protein belongs to the helicase family. UvrD subfamily.

The enzyme catalyses Couples ATP hydrolysis with the unwinding of duplex DNA by translocating in the 3'-5' direction.. It carries out the reaction ATP + H2O = ADP + phosphate + H(+). The chain is Probable DNA helicase MPN_340 from Mycoplasma pneumoniae (strain ATCC 29342 / M129 / Subtype 1) (Mycoplasmoides pneumoniae).